We begin with the raw amino-acid sequence, 349 residues long: GTPase Obg (349 aa).

One can recognise an Obg domain in the interval 1–159; the sequence is MKFLDQAKVY…LWIWLRLKLI (159 aa). Residues 160-327 form the OBG-type G domain; sequence ADAGLIGLPN…VLRALMRVVQ (168 aa). GTP is bound by residues 166–173, 191–195, 212–215, 279–282, and 308–310; these read GLPNAGKS, FTTLH, DIPG, SQID, and SSA. Residues Ser-173 and Thr-193 each contribute to the Mg(2+) site.

The protein belongs to the TRAFAC class OBG-HflX-like GTPase superfamily. OBG GTPase family. Monomer. Requires Mg(2+) as cofactor.

The protein resides in the cytoplasm. Its function is as follows. An essential GTPase which binds GTP, GDP and possibly (p)ppGpp with moderate affinity, with high nucleotide exchange rates and a fairly low GTP hydrolysis rate. Plays a role in control of the cell cycle, stress response, ribosome biogenesis and in those bacteria that undergo differentiation, in morphogenesis control. This chain is GTPase Obg, found in Chelativorans sp. (strain BNC1).